Here is a 388-residue protein sequence, read N- to C-terminus: Succinate--CoA ligase [ADP-forming] subunit beta (388 aa).

The ATP-grasp domain occupies 9 to 244 (KALFAEYGLP…PSQDDAREAH (236 aa)). ATP is bound by residues Lys46, 53 to 55 (GRG), Glu99, Thr102, and Glu107. Mg(2+) contacts are provided by Asn199 and Asp213. Substrate contacts are provided by residues Asn264 and 321 to 323 (GIV).

It belongs to the succinate/malate CoA ligase beta subunit family. Heterotetramer of two alpha and two beta subunits. The cofactor is Mg(2+).

The enzyme catalyses succinate + ATP + CoA = succinyl-CoA + ADP + phosphate. It carries out the reaction GTP + succinate + CoA = succinyl-CoA + GDP + phosphate. It participates in carbohydrate metabolism; tricarboxylic acid cycle; succinate from succinyl-CoA (ligase route): step 1/1. Functionally, succinyl-CoA synthetase functions in the citric acid cycle (TCA), coupling the hydrolysis of succinyl-CoA to the synthesis of either ATP or GTP and thus represents the only step of substrate-level phosphorylation in the TCA. The beta subunit provides nucleotide specificity of the enzyme and binds the substrate succinate, while the binding sites for coenzyme A and phosphate are found in the alpha subunit. This Shewanella loihica (strain ATCC BAA-1088 / PV-4) protein is Succinate--CoA ligase [ADP-forming] subunit beta.